The primary structure comprises 205 residues: Probable molybdenum cofactor guanylyltransferase (205 aa).

GTP is bound by residues 10 to 12, Lys22, Asp69, and Asp100; that span reads LAG. Mg(2+) is bound at residue Asp100.

This sequence belongs to the MobA family. Requires Mg(2+) as cofactor.

It is found in the cytoplasm. The catalysed reaction is Mo-molybdopterin + GTP + H(+) = Mo-molybdopterin guanine dinucleotide + diphosphate. In terms of biological role, transfers a GMP moiety from GTP to Mo-molybdopterin (Mo-MPT) cofactor (Moco or molybdenum cofactor) to form Mo-molybdopterin guanine dinucleotide (Mo-MGD) cofactor. The chain is Probable molybdenum cofactor guanylyltransferase from Natranaerobius thermophilus (strain ATCC BAA-1301 / DSM 18059 / JW/NM-WN-LF).